The chain runs to 352 residues: tRNA pseudouridine synthase D (352 aa).

The active-site Nucleophile is the D81. A TRUD domain is found at 157–303; sequence GIPNYFGVQR…MEHERRILRL (147 aa).

It belongs to the pseudouridine synthase TruD family.

It carries out the reaction uridine(13) in tRNA = pseudouridine(13) in tRNA. Responsible for synthesis of pseudouridine from uracil-13 in transfer RNAs. This chain is tRNA pseudouridine synthase D, found in Pseudomonas syringae pv. tomato (strain ATCC BAA-871 / DC3000).